The sequence spans 33 residues: Brevinin-2Rh (33 aa).

Residues cysteine 27 and cysteine 33 are joined by a disulfide bond.

Expressed by the skin glands.

The protein resides in the secreted. In terms of biological role, antimicrobial peptide. The chain is Brevinin-2Rh from Pelophylax ridibundus (Marsh frog).